The sequence spans 210 residues: 3-hexulose-6-phosphate synthase (210 aa).

It belongs to the HPS/KGPDC family. HPS subfamily.

It catalyses the reaction D-ribulose 5-phosphate + formaldehyde = D-arabino-hex-3-ulose 6-phosphate. It participates in one-carbon metabolism; formaldehyde assimilation via RuMP pathway; D-fructose 6-phosphate from D-ribulose 5-phosphate and formaldehyde: step 1/2. In terms of biological role, catalyzes the condensation of ribulose 5-phosphate with formaldehyde to form 3-hexulose 6-phosphate. The protein is 3-hexulose-6-phosphate synthase of Staphylococcus aureus (strain USA300).